We begin with the raw amino-acid sequence, 198 residues long: Recombination protein RecR (198 aa).

A C4-type zinc finger spans residues 57 to 72 (CRQCRTLSEEELCPQC). Residues 80 to 174 (SLLCVVEGPL…TLSRIAHGVP (95 aa)) form the Toprim domain.

This sequence belongs to the RecR family.

In terms of biological role, may play a role in DNA repair. It seems to be involved in an RecBC-independent recombinational process of DNA repair. It may act with RecF and RecO. The polypeptide is Recombination protein RecR (Pseudomonas paraeruginosa (strain DSM 24068 / PA7) (Pseudomonas aeruginosa (strain PA7))).